Here is a 494-residue protein sequence, read N- to C-terminus: MTTVRTRIAPSPTGDPHVGTAYIALFNLCFARQHGGQFILRIEDTDQLRSTRESEQQIYDALRWLGIEWDEGPDVGGPHGPYRQSERGHIYKRYSDELVEKGHAFTCFCTPERLDAVRAEQMARKETPRYDGHCMHLPKDEVQRRLAAGESHVTRMKVPTEGVCVVPDMLRGDVEIPWDRMDMQVLMKADGLPTYFLANVVDDHLMGITHVLRGEEWLPSAPKLIKLYEYFGWEQPQLCYMPLLRNPDKSKLSKRKNPTSITFYERMGYLPQALLNYLGRMGWSMPDEREKFTLAEMIEHFDLSRVSLGGPIFDLEKLSWLNGQWIREQSVEEFAREVQKWALNPEYLMKIAPHVQGRVENFSQIAPLAGFFFSGGVPLDASLFEHKKLDPTQVRQVLQLVLWKLESLRQWEKERITGCIQAVAEHLQLKLRDVMPLMFPAITGHASSVSVLDAMEILGADLSRYRLRQALELLGGASKKETKEWEKIRDAIPG.

The 'HIGH' region signature appears at 10–20 (PSPTGDPHVGT). Zn(2+) contacts are provided by Cys-107, Cys-109, Cys-134, and His-136. Residues 251–255 (KLSKR) carry the 'KMSKS' region motif. An ATP-binding site is contributed by Lys-254.

Belongs to the class-I aminoacyl-tRNA synthetase family. Glutamate--tRNA ligase type 1 subfamily. As to quaternary structure, monomer. Requires Zn(2+) as cofactor.

Its subcellular location is the cytoplasm. The enzyme catalyses tRNA(Glu) + L-glutamate + ATP = L-glutamyl-tRNA(Glu) + AMP + diphosphate. Its function is as follows. Catalyzes the attachment of glutamate to tRNA(Glu) in a two-step reaction: glutamate is first activated by ATP to form Glu-AMP and then transferred to the acceptor end of tRNA(Glu). This is Glutamate--tRNA ligase from Pseudomonas aeruginosa (strain UCBPP-PA14).